The sequence spans 626 residues: Hemocyanin AA6 chain (626 aa).

The Cu cation site is built by H170, H174, H201, H321, H325, and H361. Position 374 is a phosphoserine (S374).

Belongs to the tyrosinase family. Hemocyanin subfamily. In terms of assembly, scorpion hemocyanin is a 24-chain polymer with 8 different chains identified, assembled in hexameric substructures. In terms of processing, three disulfide bonds are present. In terms of tissue distribution, hemolymph.

Its subcellular location is the secreted. The protein localises to the extracellular space. In terms of biological role, hemocyanins are copper-containing oxygen carriers occurring freely dissolved in the hemolymph of many mollusks and arthropods. The chain is Hemocyanin AA6 chain from Androctonus australis (Sahara scorpion).